Reading from the N-terminus, the 356-residue chain is Holliday junction branch migration complex subunit RuvB (356 aa).

The segment at 13–201 (SSNLSRKTRL…FGITQRLNFY (189 aa)) is large ATPase domain (RuvB-L). The segment at 15-35 (NLSRKTRLLDPTPSLEEGKVR) is disordered. ATP is bound by residues leucine 40, arginine 41, glycine 82, lysine 85, threonine 86, threonine 87, 148-150 (EDF), arginine 191, tyrosine 201, and arginine 238. Threonine 86 is a binding site for Mg(2+). The tract at residues 202 to 273 (SISDLNRIIQ…LVDKSLTLHQ (72 aa)) is small ATPAse domain (RuvB-S). Positions 276-356 (ECGLDQSDRR…NSCKNSPIIK (81 aa)) are head domain (RuvB-H). DNA is bound by residues arginine 331 and arginine 336.

It belongs to the RuvB family. As to quaternary structure, homohexamer. Forms an RuvA(8)-RuvB(12)-Holliday junction (HJ) complex. HJ DNA is sandwiched between 2 RuvA tetramers; dsDNA enters through RuvA and exits via RuvB. An RuvB hexamer assembles on each DNA strand where it exits the tetramer. Each RuvB hexamer is contacted by two RuvA subunits (via domain III) on 2 adjacent RuvB subunits; this complex drives branch migration. In the full resolvosome a probable DNA-RuvA(4)-RuvB(12)-RuvC(2) complex forms which resolves the HJ.

Its subcellular location is the cytoplasm. The enzyme catalyses ATP + H2O = ADP + phosphate + H(+). Functionally, the RuvA-RuvB-RuvC complex processes Holliday junction (HJ) DNA during genetic recombination and DNA repair, while the RuvA-RuvB complex plays an important role in the rescue of blocked DNA replication forks via replication fork reversal (RFR). RuvA specifically binds to HJ cruciform DNA, conferring on it an open structure. The RuvB hexamer acts as an ATP-dependent pump, pulling dsDNA into and through the RuvAB complex. RuvB forms 2 homohexamers on either side of HJ DNA bound by 1 or 2 RuvA tetramers; 4 subunits per hexamer contact DNA at a time. Coordinated motions by a converter formed by DNA-disengaged RuvB subunits stimulates ATP hydrolysis and nucleotide exchange. Immobilization of the converter enables RuvB to convert the ATP-contained energy into a lever motion, pulling 2 nucleotides of DNA out of the RuvA tetramer per ATP hydrolyzed, thus driving DNA branch migration. The RuvB motors rotate together with the DNA substrate, which together with the progressing nucleotide cycle form the mechanistic basis for DNA recombination by continuous HJ branch migration. Branch migration allows RuvC to scan DNA until it finds its consensus sequence, where it cleaves and resolves cruciform DNA. The polypeptide is Holliday junction branch migration complex subunit RuvB (Prochlorococcus marinus (strain SARG / CCMP1375 / SS120)).